Here is an 899-residue protein sequence, read N- to C-terminus: MGLQKKTDPEQAQADSAASRHTPMMQQYLRIKADHPDTLLFYRMGDFYELFHDDAEKAARLLDITLTARGASNGVPIRMAGIPFHSADQYLARLVKLGESVAICEQIGDPATSKGPVERKVVRIVTPGTLTDAALLPDKADTFLMAVHQQTTRRGVSKTGLAWLNLASGELRLMECEAAQLGRELERIRPAELLYADGIELPALACARTRLPEWHFDQDAGTRRLREQLGVASLDPFGCAGLGAALGAAGALLNYAATTQGQSLRHVQGVKVERESEYVGLDSATRRNLELTETLRGGESPTLFSLLDTCCTAMGSRALRHWLHHPLRDPALPQARQQAIGVLIDQGTDALRTALRRLADVERITSRLALLNARPRDLSSLRDTLRALPDVQACIRDDQGSTLLAQSLHDLAVPQDCLDLLVRAVAEEPATVVRDGGVIARGYDAGLDELRDISENCGQFLIDLETRERARTGIANLRVEFNRVHGFYIEVTNGQADKVPDDYRRRQTLKNAERYITPELKAFEDKALSAQDRALAREKQLYDGLLQALLPHIGELQRVAGALARLDVLTALAERAQTLDWSAPERVAENVVDIVQGRHPVVEGQLAAESVAFIANDCQLNEARKLLLITGPNMGGKSTFMRQTALIVLLACVGAYVPARRAVIGPIDRIFTRIGAADDLAGGRSTFMVEMTEAAGILHHATPASLVLMDEIGRGTSTFDGLALAWAIARHLLSHNRSHTLFATHYFELTQLPQEFPQAANVHLSAVEHGDGIVFLHAVQDGPASQSYGLQVAQLAGVPQPVIRAARKHLAWLEQQSADATPTPQLDLFAAPPTPDDDEDDFGAAPSAVPAPLAPTLAPEQAALVDALANLDPDTLTPRAALEALYRLKALAGEALDAA.

Positions methionine 1–arginine 20 are disordered. Glycine 631 to serine 638 provides a ligand contact to ATP. Residues proline 832 to proline 852 form a disordered region. A compositionally biased stretch (low complexity) spans glycine 843–proline 852.

This sequence belongs to the DNA mismatch repair MutS family.

In terms of biological role, this protein is involved in the repair of mismatches in DNA. It is possible that it carries out the mismatch recognition step. This protein has a weak ATPase activity. This chain is DNA mismatch repair protein MutS, found in Cupriavidus necator (strain ATCC 17699 / DSM 428 / KCTC 22496 / NCIMB 10442 / H16 / Stanier 337) (Ralstonia eutropha).